Reading from the N-terminus, the 891-residue chain is Tubulin polyglutamylase TTLL6 (891 aa).

Disordered regions lie at residues 1-25 and 44-106; these read MGAL…SSPA and SQAR…KRKK. The segment covering 63–76 has biased composition (basic and acidic residues); the sequence is SEEKGDSSKEDPKE. Low complexity predominate over residues 88-99; the sequence is GAQNGLQNAQQQ. A TTL domain is found at 106 to 449; sequence KKRLVINLSS…ESCDKKKVLE (344 aa). ATP-binding positions include Lys-223, 229 to 230, 251 to 254, and 264 to 266; these read QG, QLYI, and KFD. Gln-229 serves as a coordination point for a protein. Arg-290 serves as a coordination point for L-glutamate. Residue 312-313 coordinates ATP; the sequence is TN. L-glutamate-binding residues include Tyr-314, Ser-315, and Lys-332. Mg(2+) contacts are provided by Asp-395, Glu-408, and Asn-410. His-411 contacts a protein. A c-MTBD region region spans residues 420–499; it reads RLDKEVKDGL…CGGFRLIYPS (80 aa). Lys-426 contacts L-glutamate. 4 disordered regions span residues 546–584, 607–636, 687–711, and 800–820; these read QMKK…ATQA, GERK…LTSA, TTPE…TASS, and NNLS…DSSG. Positions 687–699 are enriched in polar residues; the sequence is TTPESTTQLSISP.

It belongs to the tubulin--tyrosine ligase family. In terms of assembly, found in a complex with CEP41. It depends on Mg(2+) as a cofactor.

Its subcellular location is the cytoplasm. It localises to the cytoskeleton. The protein resides in the cilium axoneme. The protein localises to the cilium basal body. The enzyme catalyses L-glutamyl-[protein] + L-glutamate + ATP = gamma-L-glutamyl-L-glutamyl-[protein] + ADP + phosphate + H(+). It catalyses the reaction (L-glutamyl)(n)-gamma-L-glutamyl-L-glutamyl-[protein] + L-glutamate + ATP = (L-glutamyl)(n+1)-gamma-L-glutamyl-L-glutamyl-[protein] + ADP + phosphate + H(+). Polyglutamylase which modifies both tubulin and non-tubulin proteins, generating alpha-linked polyglutamate side chains on the gamma-carboxyl group of specific glutamate residues of target proteins. Preferentially mediates ATP-dependent long polyglutamate chain elongation over the initiation step of the polyglutamylation reaction. Preferentially modifies the alpha-tubulin tail over a beta-tail. Promotes tubulin polyglutamylation which stimulates spastin/SPAST-mediated microtubule severing, thereby regulating microtubule functions. Mediates microtubule polyglutamylation in primary cilia axoneme, which is important for ciliary structural formation and motility. Mediates microtubule polyglutamylation in motile cilia, necessary for the regulation of ciliary coordinated beating. Polyglutamylates non-tubulin protein nucleotidyltransferase CGAS, leading to CGAS DNA-binding inhibition, thereby preventing antiviral defense response. The polypeptide is Tubulin polyglutamylase TTLL6 (Homo sapiens (Human)).